Reading from the N-terminus, the 504-residue chain is MHTHELFKTPLEEDEVEVSEDDVVGFIAEIEQEVVNESDSEIGEYDLGDDIGAPEPFERAAANAEDSISSDGSFNPNDEDSDTDSDDSMLDEPDEAAVGGASKAKRRKDDDGPSGSSNRNQDSDGNAFDMDEDDETDETVRAIIAAIKKPRSAPPEIKLEDFITDICFHPERHIIALATIIGDVHLYEYSNEENKLLKTIEVHAKACRDVEFTEDGRSLITCSKDKSVMITDMETEKLKKLYETAHDDAINKLLVLDERLFASGDDSGTVKLWDFRTKDSIFELKEIEDQVTQMITNDQKKLLLATSADGYLTTFNIGARKLYVQSEPYEEELNCMGIYRGNSKLVVGTSKGRLYSYNWGYFGYHCDMYPGIKSPISLMIPITERIACVAGEDGNIRACHITPYRNLGVVGQHNMPIESMDINTNGELLASSSHNNDVRFWNVKYFEDFGDIKYNEKHNAYKDKRHNLPSSKCTNASDFFADLAKEDNNDNENDDATAGPSNTT.

A compositionally biased stretch (acidic residues) spans 32–49; that stretch reads QEVVNESDSEIGEYDLGD. Residues 32–135 form a disordered region; the sequence is QEVVNESDSE…NAFDMDEDDE (104 aa). Residues 66–76 are compositionally biased toward polar residues; that stretch reads DSISSDGSFNP. A compositionally biased stretch (acidic residues) spans 77–95; it reads NDEDSDTDSDDSMLDEPDE. The segment covering 114–124 has biased composition (polar residues); the sequence is SGSSNRNQDSD. WD repeat units lie at residues 158–197, 202–241, 245–283, 286–325, 328–367, and 412–451; these read KLED…NKLL, VHAK…LKKL, AHDD…SIFE, EIED…LYVQ, PYEE…YHCD, and QHNM…DFGD. The segment at 484-504 is disordered; that stretch reads AKEDNNDNENDDATAGPSNTT.

This sequence belongs to the WD repeat WDR55 family.

The chain is WD repeat-containing protein 55 homolog from Drosophila willistoni (Fruit fly).